The sequence spans 92 residues: Large ribosomal subunit protein eL43 (92 aa).

The C4-type zinc finger occupies 39 to 60 (CEFCGKFAVKRKAVGIWGCKDC).

Belongs to the eukaryotic ribosomal protein eL43 family.

In Pseudotsuga menziesii (Douglas-fir), this protein is Large ribosomal subunit protein eL43 (RPL37A).